The following is a 1393-amino-acid chain: DNA-directed RNA polymerase subunit beta' (1393 aa).

Zn(2+)-binding residues include cysteine 71, cysteine 73, cysteine 86, and cysteine 89. Residues aspartate 462, aspartate 464, and aspartate 466 each contribute to the Mg(2+) site. Residues cysteine 811, cysteine 885, cysteine 892, and cysteine 895 each coordinate Zn(2+).

It belongs to the RNA polymerase beta' chain family. In terms of assembly, the RNAP catalytic core consists of 2 alpha, 1 beta, 1 beta' and 1 omega subunit. When a sigma factor is associated with the core the holoenzyme is formed, which can initiate transcription. Mg(2+) serves as cofactor. Zn(2+) is required as a cofactor.

The enzyme catalyses RNA(n) + a ribonucleoside 5'-triphosphate = RNA(n+1) + diphosphate. DNA-dependent RNA polymerase catalyzes the transcription of DNA into RNA using the four ribonucleoside triphosphates as substrates. The polypeptide is DNA-directed RNA polymerase subunit beta' (Azorhizobium caulinodans (strain ATCC 43989 / DSM 5975 / JCM 20966 / LMG 6465 / NBRC 14845 / NCIMB 13405 / ORS 571)).